Here is a 503-residue protein sequence, read N- to C-terminus: Probable cytosol aminopeptidase (503 aa).

Mn(2+) contacts are provided by K274 and D279. Residue K286 is part of the active site. Positions 297, 356, and 358 each coordinate Mn(2+). The active site involves R360.

Belongs to the peptidase M17 family. Mn(2+) is required as a cofactor.

The protein resides in the cytoplasm. It carries out the reaction Release of an N-terminal amino acid, Xaa-|-Yaa-, in which Xaa is preferably Leu, but may be other amino acids including Pro although not Arg or Lys, and Yaa may be Pro. Amino acid amides and methyl esters are also readily hydrolyzed, but rates on arylamides are exceedingly low.. The enzyme catalyses Release of an N-terminal amino acid, preferentially leucine, but not glutamic or aspartic acids.. Functionally, presumably involved in the processing and regular turnover of intracellular proteins. Catalyzes the removal of unsubstituted N-terminal amino acids from various peptides. The sequence is that of Probable cytosol aminopeptidase from Burkholderia pseudomallei (strain 1710b).